Here is a 264-residue protein sequence, read N- to C-terminus: Small ribosomal subunit protein eS1 (264 aa).

An N6-acetyllysine; alternate modification is found at lysine 34. Residue lysine 34 forms a Glycyl lysine isopeptide (Lys-Gly) (interchain with G-Cter in SUMO2); alternate linkage. Lysine 56 bears the N6-acetyllysine mark. Tyrosine 155 is modified (ADP-ribosyltyrosine). Residues histidine 232–valine 264 are disordered. A phosphoserine mark is found at serine 236 and serine 237. The span at threonine 242–glycine 255 shows a compositional bias: basic and acidic residues. Lysine 249 is modified (N6-acetyllysine; alternate). Residue lysine 249 forms a Glycyl lysine isopeptide (Lys-Gly) (interchain with G-Cter in SUMO2); alternate linkage. Tyrosine 256 is modified (phosphotyrosine). Serine 263 is subject to Phosphoserine.

The protein belongs to the eukaryotic ribosomal protein eS1 family. As to quaternary structure, component of the small ribosomal subunit. Mature ribosomes consist of a small (40S) and a large (60S) subunit. The 40S subunit contains about 33 different proteins and 1 molecule of RNA (18S). The 60S subunit contains about 49 different proteins and 3 molecules of RNA (28S, 5.8S and 5S). Identified in a IGF2BP1-dependent mRNP granule complex containing untranslated mRNAs. Binds with high affinity to IPO4. Interacts with DDIT3. Part of the small subunit (SSU) processome, composed of more than 70 proteins and the RNA chaperone small nucleolar RNA (snoRNA) U3. Post-translationally, ADP-ribosylated at Tyr-155 by PARP1 in presence of HPF1.

It localises to the cytoplasm. Its subcellular location is the nucleus. The protein localises to the nucleolus. Its function is as follows. Component of the small ribosomal subunit. The ribosome is a large ribonucleoprotein complex responsible for the synthesis of proteins in the cell. Part of the small subunit (SSU) processome, first precursor of the small eukaryotic ribosomal subunit. During the assembly of the SSU processome in the nucleolus, many ribosome biogenesis factors, an RNA chaperone and ribosomal proteins associate with the nascent pre-rRNA and work in concert to generate RNA folding, modifications, rearrangements and cleavage as well as targeted degradation of pre-ribosomal RNA by the RNA exosome. May play a role during erythropoiesis through regulation of transcription factor DDIT3. The sequence is that of Small ribosomal subunit protein eS1 from Macaca fascicularis (Crab-eating macaque).